The sequence spans 101 residues: Urease subunit beta (101 aa).

Belongs to the urease beta subunit family. As to quaternary structure, heterotrimer of UreA (gamma), UreB (beta) and UreC (alpha) subunits. Three heterotrimers associate to form the active enzyme.

It localises to the cytoplasm. The catalysed reaction is urea + 2 H2O + H(+) = hydrogencarbonate + 2 NH4(+). It participates in nitrogen metabolism; urea degradation; CO(2) and NH(3) from urea (urease route): step 1/1. In Paraburkholderia phymatum (strain DSM 17167 / CIP 108236 / LMG 21445 / STM815) (Burkholderia phymatum), this protein is Urease subunit beta.